The chain runs to 100 residues: Large ribosomal subunit protein uL23 (100 aa).

This sequence belongs to the universal ribosomal protein uL23 family. In terms of assembly, part of the 50S ribosomal subunit. Contacts protein L29, and trigger factor when it is bound to the ribosome.

One of the early assembly proteins it binds 23S rRNA. One of the proteins that surrounds the polypeptide exit tunnel on the outside of the ribosome. Forms the main docking site for trigger factor binding to the ribosome. The sequence is that of Large ribosomal subunit protein uL23 from Vibrio vulnificus (strain CMCP6).